A 161-amino-acid polypeptide reads, in one-letter code: Endoribonuclease YbeY (161 aa).

Residues histidine 127, histidine 131, and histidine 137 each contribute to the Zn(2+) site.

This sequence belongs to the endoribonuclease YbeY family. Requires Zn(2+) as cofactor.

The protein localises to the cytoplasm. Single strand-specific metallo-endoribonuclease involved in late-stage 70S ribosome quality control and in maturation of the 3' terminus of the 16S rRNA. This chain is Endoribonuclease YbeY, found in Listeria welshimeri serovar 6b (strain ATCC 35897 / DSM 20650 / CCUG 15529 / CIP 8149 / NCTC 11857 / SLCC 5334 / V8).